A 398-amino-acid chain; its full sequence is Stabilizer of axonemal microtubules 2 (398 aa).

6 mn regions span residues 114–126 (STTF…PQEI), 148–162 (ITSH…QLEL), 248–260 (NSTS…PYQA), 282–296 (KSIM…ESCR), 316–328 (LSTF…PHEL), and 350–364 (VTMY…RQEI).

This sequence belongs to the FAM154 family.

This Homo sapiens (Human) protein is Stabilizer of axonemal microtubules 2 (SAXO2).